We begin with the raw amino-acid sequence, 1210 residues long: Epidermal growth factor receptor (1210 aa).

The first 24 residues, 1-24 (MRPSGTAGAALLALLAALCPASRA), serve as a signal peptide directing secretion. Topologically, residues 25–645 (LEEKKVCQGT…CPTNGPKIPS (621 aa)) are extracellular. Residues C31 and C58 are joined by a disulfide bond. An N-linked (GlcNAc...) (complex) asparagine; atypical; partial glycan is attached at N56. The N-linked (GlcNAc...) asparagine; atypical glycan is linked to N73. An Approximate repeat occupies 75–300 (DLSFLKTIQE…CVKKCPRNYV (226 aa)). N-linked (GlcNAc...) asparagine glycosylation is found at N128, N175, and N196. Cystine bridges form between C157-C187, C190-C199, C194-C207, C215-C223, C219-C231, C232-C240, C236-C248, C251-C260, C264-C291, C295-C307, C311-C326, C329-C333, and C337-C362. Residue S229 is modified to Phosphoserine. N-linked (GlcNAc...) asparagine glycans are attached at residues N352, N361, N413, and N444. Residues 390-600 (QELDILKTVK…CVKTCPAGVM (211 aa)) form an Approximate repeat. 11 cysteine pairs are disulfide-bonded: C470-C499, C506-C515, C510-C523, C526-C535, C539-C555, C558-C571, C562-C579, C582-C591, C595-C617, C620-C628, and C624-C636. N-linked (GlcNAc...) asparagine glycosylation occurs at N528. N568 is a glycosylation site (N-linked (GlcNAc...) asparagine; partial). N603 carries an N-linked (GlcNAc...) asparagine; partial glycan. N623 carries an N-linked (GlcNAc...) (high mannose) asparagine glycan. Residues 646-668 (IATGMVGALLLLLVVALGIGLFM) traverse the membrane as a helical segment. The Cytoplasmic portion of the chain corresponds to 669-1210 (RRRHIVRKRT…APQSSEFIGA (542 aa)). T678 bears the Phosphothreonine; by PKC and PKD/PRKD1 mark. The tract at residues 688–704 (LVEPLTPSGEAPNQALL) is important for dimerization, phosphorylation and activation. T693 bears the Phosphothreonine; by PKD/PRKD1 mark. At S695 the chain carries Phosphoserine. Residues 712–979 (FKKIKVLGSG…KMARDPQRYL (268 aa)) enclose the Protein kinase domain. K716 is covalently cross-linked (Glycyl lysine isopeptide (Lys-Gly) (interchain with G-Cter in ubiquitin)). 718-726 (LGSGAFGTV) is a binding site for ATP. K737 participates in a covalent cross-link: Glycyl lysine isopeptide (Lys-Gly) (interchain with G-Cter in ubiquitin). K745 contacts ATP. N6-(2-hydroxyisobutyryl)lysine is present on K745. Glycyl lysine isopeptide (Lys-Gly) (interchain with G-Cter in ubiquitin) cross-links involve residues K754 and K757. 790–791 (TQ) contributes to the ATP binding site. Residue D837 is the Proton acceptor of the active site. Position 855 (D855) interacts with ATP. K867 is covalently cross-linked (Glycyl lysine isopeptide (Lys-Gly) (interchain with G-Cter in ubiquitin)). At Y869 the chain carries Phosphotyrosine. Residues K929, K960, and K970 each participate in a glycyl lysine isopeptide (Lys-Gly) (interchain with G-Cter in ubiquitin) cross-link. 2 positions are modified to phosphoserine: S991 and S995. Phosphotyrosine; by autocatalysis is present on residues Y998 and Y1016. Residues S1026 and S1039 each carry the phosphoserine modification. T1041 carries the post-translational modification Phosphothreonine. S1042 bears the Phosphoserine mark. C1049 carries the S-palmitoyl cysteine lipid modification. A Phosphoserine modification is found at S1064. Y1069 bears the Phosphotyrosine mark. Residues S1070, S1071, and S1081 each carry the phosphoserine modification. 2 positions are modified to phosphotyrosine; by autocatalysis: Y1092 and Y1110. A disordered region spans residues 1097 to 1137 (VPKRPAGSVQNPVYHNQPLNPAPSRDPHYQDPHSTAVGNPE). Polar residues-rich tracts occupy residues 1104 to 1115 (SVQNPVYHNQPL) and 1128 to 1137 (PHSTAVGNPE). The S-palmitoyl cysteine moiety is linked to residue C1146. S1166 carries the post-translational modification Phosphoserine. A phosphotyrosine; by autocatalysis mark is found at Y1172 and Y1197. R1199 is subject to Omega-N-methylarginine.

Belongs to the protein kinase superfamily. Tyr protein kinase family. EGF receptor subfamily. In terms of assembly, binding of the ligand triggers homo- and/or heterodimerization of the receptor triggering its autophosphorylation. Heterodimer with ERBB2. Forms a complex with CCDC88A/GIV (via SH2-like regions) and GNAI3 which leads to enhanced EGFR signaling and triggering of cell migration; binding to CCDC88A requires autophosphorylation of the EGFR C-terminal region, and ligand stimulation is required for recruitment of GNAI3 to the complex. Interacts with ERRFI1; inhibits dimerization of the kinase domain and autophosphorylation. Part of a complex with ERBB2 and either PIK3C2A or PIK3C2B. Interacts with GRB2; an adapter protein coupling the receptor to downstream signaling pathways. Interacts with GAB2; involved in signaling downstream of EGFR. Interacts with STAT3; mediates EGFR downstream signaling in cell proliferation. Interacts with RIPK1; involved in NF-kappa-B activation. Interacts (autophosphorylated) with CBL, CBLB and CBLC; involved in EGFR ubiquitination and regulation; interaction with CBL is reduced in the presence of tensin TNS4. Interacts with SOCS5; regulates EGFR degradation through ELOC- and ELOB-mediated ubiquitination and proteasomal degradation. Interacts with PRMT5; methylates EGFR and enhances interaction with PTPN6. Interacts (phosphorylated) with PTPN6; inhibits EGFR-dependent activation of MAPK/ERK. Interacts with COPG1; essential for regulation of EGF-dependent nuclear transport of EGFR by retrograde trafficking from the Golgi to the ER. Interacts with TNK2; this interaction is dependent on EGF stimulation and kinase activity of EGFR. Interacts with PCNA; positively regulates PCNA. Interacts with PELP1. Interacts with MUC1. Interacts with AP2M1. Interacts with FER. May interact with EPS8; mediates EPS8 phosphorylation. Interacts (via SH2 domains) with GRB2, NCK1 and NCK2. Interacts with ATXN2. Interacts with GAREM1. Interacts (ubiquitinated) with ANKRD13A/B/D; the interaction is direct and may regulate EGFR internalization after EGF stimulation. Interacts with GPER1; the interaction occurs in an estrogen-dependent manner. Interacts (via C-terminal cytoplasmic kinase domain) with ZPR1 (via zinc fingers). Interacts with RNF115 and RNF126. Interacts with GPRC5A (via its transmembrane domain). Interacts with FAM83B; positively regulates EGFR inducing its autophosphorylation in absence of stimulation by EGF. Interacts with LAPTM4B; positively correlates with EGFR activation. Interacts with STX19. Interacts with CD44. Interacts with PGRMC1; the interaction requires PGRMC1 homodimerization. Interacts with PIKFYVE. Interacts with NEU3. Interacts with TRAF4. Interacts with the ant venom OMEGA-myrmeciitoxin(02)-Mg1a. Interacts with CD82; this interaction facilitates ligand-induced endocytosis of the receptor and its subsequent desensitization. Post-translationally, phosphorylated on Tyr residues in response to EGF. Phosphorylation at Ser-695 is partial and occurs only if Thr-693 is phosphorylated. Phosphorylation at Thr-678 and Thr-693 by PRKD1 inhibits EGF-induced MAPK8/JNK1 activation. Dephosphorylation by PTPRJ prevents endocytosis and stabilizes the receptor at the plasma membrane. Autophosphorylation at Tyr-1197 is stimulated by methylation at Arg-1199 and enhances interaction with PTPN6. Autophosphorylation at Tyr-1092 and/or Tyr-1110 recruits STAT3. Dephosphorylated by PTPN1 and PTPN2. Monoubiquitinated and polyubiquitinated upon EGF stimulation; which does not affect tyrosine kinase activity or signaling capacity but may play a role in lysosomal targeting. Polyubiquitin linkage is mainly through 'Lys-63', but linkage through 'Lys-48', 'Lys-11' and 'Lys-29' also occurs. Deubiquitination by OTUD7B prevents degradation. Ubiquitinated by RNF115 and RNF126. Ubiquitinated by ZNRF1 or CBL at different lysines in response to EGF stimulation; leading to recruitment of the ESCRT machinery and subsequent degradation in the lysosomes. Deubiquitinated by UCHL1 leading to the inhibition of its degradation. In terms of processing, palmitoylated on Cys residues by ZDHHC20. Palmitoylation inhibits internalization after ligand binding, and increases the persistence of tyrosine-phosphorylated EGFR at the cell membrane. Palmitoylation increases the amplitude and duration of EGFR signaling. Post-translationally, methylated. Methylation at Arg-1199 by PRMT5 stimulates phosphorylation at Tyr-1197. Ubiquitously expressed. Isoform 2 is also expressed in ovarian cancers.

The protein localises to the cell membrane. It localises to the endoplasmic reticulum membrane. It is found in the golgi apparatus membrane. Its subcellular location is the nucleus membrane. The protein resides in the endosome. The protein localises to the endosome membrane. It localises to the nucleus. It is found in the secreted. It catalyses the reaction L-tyrosyl-[protein] + ATP = O-phospho-L-tyrosyl-[protein] + ADP + H(+). With respect to regulation, endocytosis and inhibition of the activated EGFR by phosphatases like PTPRJ and PTPRK constitute immediate regulatory mechanisms. Upon EGF-binding phosphorylates EPS15 that regulates EGFR endocytosis and activity. Moreover, inducible feedback inhibitors including LRIG1, SOCS4, SOCS5 and ERRFI1 constitute alternative regulatory mechanisms for the EGFR signaling. Up-regulated by NEU3-mediated desialylation of N-linked glycan at Asn-528. Functionally, receptor tyrosine kinase binding ligands of the EGF family and activating several signaling cascades to convert extracellular cues into appropriate cellular responses. Known ligands include EGF, TGFA/TGF-alpha, AREG, epigen/EPGN, BTC/betacellulin, epiregulin/EREG and HBEGF/heparin-binding EGF. Ligand binding triggers receptor homo- and/or heterodimerization and autophosphorylation on key cytoplasmic residues. The phosphorylated receptor recruits adapter proteins like GRB2 which in turn activates complex downstream signaling cascades. Activates at least 4 major downstream signaling cascades including the RAS-RAF-MEK-ERK, PI3 kinase-AKT, PLCgamma-PKC and STATs modules. May also activate the NF-kappa-B signaling cascade. Also directly phosphorylates other proteins like RGS16, activating its GTPase activity and probably coupling the EGF receptor signaling to the G protein-coupled receptor signaling. Also phosphorylates MUC1 and increases its interaction with SRC and CTNNB1/beta-catenin. Positively regulates cell migration via interaction with CCDC88A/GIV which retains EGFR at the cell membrane following ligand stimulation, promoting EGFR signaling which triggers cell migration. Plays a role in enhancing learning and memory performance. Plays a role in mammalian pain signaling (long-lasting hypersensitivity). Isoform 2 may act as an antagonist of EGF action. Its function is as follows. (Microbial infection) Acts as a receptor for hepatitis C virus (HCV) in hepatocytes and facilitates its cell entry. Mediates HCV entry by promoting the formation of the CD81-CLDN1 receptor complexes that are essential for HCV entry and by enhancing membrane fusion of cells expressing HCV envelope glycoproteins. This chain is Epidermal growth factor receptor, found in Homo sapiens (Human).